A 100-amino-acid polypeptide reads, in one-letter code: Small ribosomal subunit protein uS14c (100 aa).

Residues 28 to 45 (KKEIKKVPSLSEKMEIHG) show a composition bias toward basic and acidic residues. Residues 28–59 (KKEIKKVPSLSEKMEIHGKLQSPPRNSAPTRL) form a disordered region.

Belongs to the universal ribosomal protein uS14 family. In terms of assembly, part of the 30S ribosomal subunit.

The protein resides in the plastid. Its subcellular location is the chloroplast. Binds 16S rRNA, required for the assembly of 30S particles. The polypeptide is Small ribosomal subunit protein uS14c (Nandina domestica (Heavenly bamboo)).